Reading from the N-terminus, the 342-residue chain is Ribosomal RNA small subunit methyltransferase C (342 aa).

The protein belongs to the methyltransferase superfamily. RsmC family. In terms of assembly, monomer.

The protein localises to the cytoplasm. The catalysed reaction is guanosine(1207) in 16S rRNA + S-adenosyl-L-methionine = N(2)-methylguanosine(1207) in 16S rRNA + S-adenosyl-L-homocysteine + H(+). Functionally, specifically methylates the guanine in position 1207 of 16S rRNA in the 30S particle. The chain is Ribosomal RNA small subunit methyltransferase C from Shewanella piezotolerans (strain WP3 / JCM 13877).